The chain runs to 247 residues: Small ribosomal subunit protein uS2 (247 aa).

Belongs to the universal ribosomal protein uS2 family.

In Pseudomonas savastanoi pv. phaseolicola (strain 1448A / Race 6) (Pseudomonas syringae pv. phaseolicola (strain 1448A / Race 6)), this protein is Small ribosomal subunit protein uS2.